The following is a 146-amino-acid chain: Large ribosomal subunit protein uL15 (146 aa).

The disordered stretch occupies residues Met1–Pro56. Gly residues-rich tracts occupy residues Arg21–Gln35 and Ser42–Gly52.

It belongs to the universal ribosomal protein uL15 family. Part of the 50S ribosomal subunit.

Binds to the 23S rRNA. The polypeptide is Large ribosomal subunit protein uL15 (Clostridium botulinum (strain ATCC 19397 / Type A)).